The sequence spans 216 residues: Large ribosomal subunit protein uL3 (216 aa).

Q157 carries the post-translational modification N5-methylglutamine.

It belongs to the universal ribosomal protein uL3 family. Part of the 50S ribosomal subunit. Forms a cluster with proteins L14 and L19. In terms of processing, methylated by PrmB.

Its function is as follows. One of the primary rRNA binding proteins, it binds directly near the 3'-end of the 23S rRNA, where it nucleates assembly of the 50S subunit. This Xanthomonas campestris pv. campestris (strain 8004) protein is Large ribosomal subunit protein uL3.